The primary structure comprises 147 residues: Mid1-interacting protein 1-B (147 aa).

This sequence belongs to the SPOT14 family.

The protein resides in the nucleus. It is found in the cytoplasm. The protein localises to the cytoskeleton. In terms of biological role, involved in stabilization of microtubules. May play a role in the regulation of lipogenesis. The chain is Mid1-interacting protein 1-B from Danio rerio (Zebrafish).